Consider the following 142-residue polypeptide: MERTLLLVKPDGVNRGLSGEILGRMEKLGLKMIGLRMLQMDAVLADKHYAPHRERPFFKDLVTYITSGPIVAAVFEGENAVEKMRKAMGATDPAKSEKGTVRGDLGINIEQNTVHGSDSAENAKHEISLFFSESELVNYDRR.

The ATP site is built by K9, F57, R85, T91, R102, and N112. A disordered region spans residues 87–106 (AMGATDPAKSEKGTVRGDLG). The Pros-phosphohistidine intermediate role is filled by H115.

It belongs to the NDK family. In terms of assembly, homotetramer. Mg(2+) serves as cofactor.

Its subcellular location is the cytoplasm. It carries out the reaction a 2'-deoxyribonucleoside 5'-diphosphate + ATP = a 2'-deoxyribonucleoside 5'-triphosphate + ADP. The catalysed reaction is a ribonucleoside 5'-diphosphate + ATP = a ribonucleoside 5'-triphosphate + ADP. Major role in the synthesis of nucleoside triphosphates other than ATP. The ATP gamma phosphate is transferred to the NDP beta phosphate via a ping-pong mechanism, using a phosphorylated active-site intermediate. This chain is Nucleoside diphosphate kinase, found in Dehalococcoides mccartyi (strain ATCC BAA-2266 / KCTC 15142 / 195) (Dehalococcoides ethenogenes (strain 195)).